The following is a 331-amino-acid chain: Putative heat stress transcription factor A-6a (331 aa).

Residues 135-160 are disordered; the sequence is RRGAGTGSTTPRAVNCGGGGGEGEVE. Positions 156–238 form a coiled coil; sequence EGEVERLRRD…VERKKRRMLA (83 aa). The tract at residues 162-212 is hydrophobic repeat HR-A/B; that stretch reads LRRDKEALARELARLRRQQQEARAQLLDMERRVRGTERRQEQCTEFLARAL. The Nuclear localization signal motif lies at 230-235; that stretch reads ERKKRR. Residues 246–253 carry the Nuclear export signal motif; the sequence is LTFEALAL. The AHA1 signature appears at 270 to 279; it reads DMIWYELLGE. The AHA2 signature appears at 305–313; it reads AEPWEEMGE.

Belongs to the HSF family. Class A subfamily. As to quaternary structure, homotrimer. Post-translationally, exhibits temperature-dependent phosphorylation.

Its subcellular location is the cytoplasm. It is found in the nucleus. In terms of biological role, transcriptional regulator that specifically binds DNA of heat shock promoter elements (HSE). The polypeptide is Putative heat stress transcription factor A-6a (HSFA6A) (Oryza sativa subsp. japonica (Rice)).